The primary structure comprises 609 residues: Alpha-glycerophosphate oxidase (609 aa).

21-49 (DVLIIGGGITGAGVAVQTAAAGMKTVLLE) contributes to the FAD binding site.

FAD serves as cofactor.

It is found in the cytoplasm. The enzyme catalyses sn-glycerol 3-phosphate + O2 = dihydroxyacetone phosphate + H2O2. The protein operates within membrane lipid metabolism; glycerophospholipid metabolism. This chain is Alpha-glycerophosphate oxidase (glpO), found in Enterococcus casseliflavus (Enterococcus flavescens).